Here is a 218-residue protein sequence, read N- to C-terminus: MGTRDDEYDYLFKVVLIGDSGVGKSNLLSRFTRNEFNLESKSTIGVEFATRSIQVDGKTIKAQIWDTAGQERYRAITSAYYRGAVGALLVYDIAKHLTYENVERWLKELRDHADSNIVIMLVGNKSDLRHLRAVPTDEARAFAEKNNLSFIETSALDSTNVEEAFKNILTEIYRIVSQKQIADRAAHDESPGNNVVDISVPPTTDGQRPNKLQCCQSL.

Position 2 is an N-acetylglycine (Gly-2). Arg-4 carries the citrulline modification. Residues Ser-20, Gly-21, Gly-23, Lys-24, Ser-25, Asn-26, Asn-37, Leu-38, Ser-40, Ser-42, and Thr-43 each contribute to the GTP site. Ser-25 is a binding site for Mg(2+). The Switch 1 motif lies at 36–47 (FNLESKSTIGVE). Positions 43 and 66 each coordinate Mg(2+). The short motif at 67–86 (TAGQERYRAITSAYYRGAVG) is the Switch 2 element. 6 residues coordinate GTP: Gly-69, Asn-124, Lys-125, Asp-127, Ala-155, and Leu-156. The tract at residues 184 to 218 (RAAHDESPGNNVVDISVPPTTDGQRPNKLQCCQSL) is disordered. S-geranylgeranyl cysteine attachment occurs at residues Cys-214 and Cys-215. Cys-215 carries the post-translational modification Cysteine methyl ester. Residues 216-218 (QSL) constitute a propeptide, removed in mature form.

It belongs to the small GTPase superfamily. Rab family. In terms of assembly, interacts with KCNMA1. Interacts with RAB11FIP1, RAB11FIP2, RAB11FIP3 and RAB11FIP4. May interact with TBC1D14. Interacts with ATP6V1E1. Interacts with PI4KB. Interacts (GDP-bound form) with ZFYVE27. Interacts (GDP-bound form) with KIF5A in a ZFYVE27-dependent manner. Interacts with RELCH. Interacts (in GTP-bound form) with TBC1D8B (via domain Rab-GAP TBC). Forms a complex containing RAB11B, ASAP1, Rabin8/RAB3IP, RAP11FIP3 and ARF4. Interacts with WDR44. It depends on Mg(2+) as a cofactor. Post-translationally, citrullinated by PADI4. In terms of tissue distribution, abundantly expressed in brain, heart and testis. Also detected in kidney and pancreatic islets.

It is found in the recycling endosome membrane. The protein resides in the cytoplasmic vesicle. The protein localises to the secretory vesicle. It localises to the synaptic vesicle membrane. Its subcellular location is the phagosome membrane. The catalysed reaction is GTP + H2O = GDP + phosphate + H(+). Regulated by guanine nucleotide exchange factors (GEFs) which promote the exchange of bound GDP for free GTP. Regulated by GTPase activating proteins (GAPs) which increase the GTP hydrolysis activity. Inhibited by GDP dissociation inhibitors (GDIs) which prevent Rab-GDP dissociation. In terms of biological role, the small GTPases Rab are key regulators of intracellular membrane trafficking, from the formation of transport vesicles to their fusion with membranes. Rabs cycle between an inactive GDP-bound form and an active GTP-bound form that is able to recruit to membranes different set of downstream effectors directly responsible for vesicle formation, movement, tethering and fusion. The small Rab GTPase RAB11B plays a role in endocytic recycling, regulating apical recycling of several transmembrane proteins including cystic fibrosis transmembrane conductance regulator/CFTR, epithelial sodium channel/ENaC, potassium voltage-gated channel, and voltage-dependent L-type calcium channel. May also regulate constitutive and regulated secretion, like insulin granule exocytosis. Required for melanosome transport and release from melanocytes. Also regulates V-ATPase intracellular transport in response to extracellular acidosis. Promotes Rabin8/RAB3IP preciliary vesicular trafficking to mother centriole by forming a ciliary targeting complex containing Rab11, ASAP1, Rabin8/RAB3IP, RAB11FIP3 and ARF4, thereby regulating ciliogenesis initiation. On the contrary, upon LPAR1 receptor signaling pathway activation, interaction with phosphorylated WDR44 prevents Rab11-RAB3IP-RAB11FIP3 complex formation and cilia growth. This Mus musculus (Mouse) protein is Ras-related protein Rab-11B.